The following is a 347-amino-acid chain: DNA primase small subunit PriS (347 aa).

Residues D95 and D97 contribute to the active site. Zn(2+)-binding residues include C106, H108, C114, and C117. The Zinc knuckle motif signature appears at 106–117 (CNHEPGTVCPIC). D280 is an active-site residue.

The protein belongs to the eukaryotic-type primase small subunit family. In terms of assembly, heterodimer of a small subunit (PriS) and a large subunit (PriL). Both participate in formation of the active center, but the ATP-binding site is exclusively located on the small subunit. Requires Mg(2+) as cofactor. Mn(2+) serves as cofactor.

Functionally, catalytic subunit of DNA primase, an RNA polymerase that catalyzes the synthesis of short RNA molecules used as primers for DNA polymerase during DNA replication. The small subunit contains the primase catalytic core and has DNA synthesis activity on its own. Binding to the large subunit stabilizes and modulates the activity, increasing the rate of DNA synthesis while decreasing the length of the DNA fragments, and conferring RNA synthesis capability. The DNA polymerase activity may enable DNA primase to also catalyze primer extension after primer synthesis. May also play a role in DNA repair. This chain is DNA primase small subunit PriS, found in Pyrococcus furiosus (strain ATCC 43587 / DSM 3638 / JCM 8422 / Vc1).